We begin with the raw amino-acid sequence, 169 residues long: Disulfide bond formation protein B 1 (169 aa).

At 1-14 the chain is on the cytoplasmic side; the sequence is MSEETIRLGRERRY. A helical transmembrane segment spans residues 15-31; the sequence is LVLLGIICLALIGGALY. Residues 32–49 are Periplasmic-facing; it reads MQIVLGEAPCPLCILQRY. A disulfide bridge links C41 with C44. Residues 50 to 64 form a helical membrane-spanning segment; sequence ALLLIALFAFIGAAM. Topologically, residues 65–71 are cytoplasmic; the sequence is RTRRSIT. Residues 72-89 form a helical membrane-spanning segment; that stretch reads VFEVLVVICAIAGAGVAG. The Periplasmic segment spans residues 90-144; that stretch reads HHVYTQFYPAVSCGIDVLQPIVDDLPLAKIFPLGFQVDGFCSTPYPPILGLSLAQ. C102 and C130 are oxidised to a cystine. The chain crosses the membrane as a helical span at residues 145 to 163; the sequence is WALVAFVLVVILVPLLTSR. The Cytoplasmic portion of the chain corresponds to 164 to 169; the sequence is NRKALR.

This sequence belongs to the DsbB family.

It localises to the cell inner membrane. Functionally, required for disulfide bond formation in some periplasmic proteins. Acts by oxidizing the DsbA protein. The protein is Disulfide bond formation protein B 1 of Pseudomonas fluorescens (strain Pf0-1).